Reading from the N-terminus, the 432-residue chain is Adenylosuccinate synthetase (432 aa).

GTP contacts are provided by residues 13-19 (GDEGKGK) and 41-43 (GHT). The active-site Proton acceptor is the D14. 2 residues coordinate Mg(2+): D14 and G41. IMP is bound by residues 14-17 (DEGK), 39-42 (NAGH), T130, R144, Q225, T240, and R304. H42 serves as the catalytic Proton donor. A substrate-binding site is contributed by 300-306 (AVTGRPR). Residues R306, 332–334 (KLD), and 415–417 (STG) each bind GTP.

It belongs to the adenylosuccinate synthetase family. In terms of assembly, homodimer. Mg(2+) serves as cofactor.

Its subcellular location is the cytoplasm. It catalyses the reaction IMP + L-aspartate + GTP = N(6)-(1,2-dicarboxyethyl)-AMP + GDP + phosphate + 2 H(+). The protein operates within purine metabolism; AMP biosynthesis via de novo pathway; AMP from IMP: step 1/2. Its function is as follows. Plays an important role in the de novo pathway of purine nucleotide biosynthesis. Catalyzes the first committed step in the biosynthesis of AMP from IMP. In Actinobacillus pleuropneumoniae serotype 5b (strain L20), this protein is Adenylosuccinate synthetase.